The primary structure comprises 347 residues: Phenylalanine--tRNA ligase alpha subunit (347 aa).

Residue Glu-261 participates in Mg(2+) binding.

This sequence belongs to the class-II aminoacyl-tRNA synthetase family. Phe-tRNA synthetase alpha subunit type 1 subfamily. As to quaternary structure, tetramer of two alpha and two beta subunits. The cofactor is Mg(2+).

The protein resides in the cytoplasm. The catalysed reaction is tRNA(Phe) + L-phenylalanine + ATP = L-phenylalanyl-tRNA(Phe) + AMP + diphosphate + H(+). In Streptococcus thermophilus (strain CNRZ 1066), this protein is Phenylalanine--tRNA ligase alpha subunit.